Here is a 581-residue protein sequence, read N- to C-terminus: Proline--tRNA ligase (581 aa).

It belongs to the class-II aminoacyl-tRNA synthetase family. ProS type 1 subfamily. In terms of assembly, homodimer.

The protein localises to the cytoplasm. The catalysed reaction is tRNA(Pro) + L-proline + ATP = L-prolyl-tRNA(Pro) + AMP + diphosphate. Functionally, catalyzes the attachment of proline to tRNA(Pro) in a two-step reaction: proline is first activated by ATP to form Pro-AMP and then transferred to the acceptor end of tRNA(Pro). As ProRS can inadvertently accommodate and process non-cognate amino acids such as alanine and cysteine, to avoid such errors it has two additional distinct editing activities against alanine. One activity is designated as 'pretransfer' editing and involves the tRNA(Pro)-independent hydrolysis of activated Ala-AMP. The other activity is designated 'posttransfer' editing and involves deacylation of mischarged Ala-tRNA(Pro). The misacylated Cys-tRNA(Pro) is not edited by ProRS. This chain is Proline--tRNA ligase, found in Leptothrix cholodnii (strain ATCC 51168 / LMG 8142 / SP-6) (Leptothrix discophora (strain SP-6)).